Reading from the N-terminus, the 228-residue chain is 2-C-methyl-D-erythritol 4-phosphate cytidylyltransferase (228 aa).

It belongs to the IspD/TarI cytidylyltransferase family. IspD subfamily.

It carries out the reaction 2-C-methyl-D-erythritol 4-phosphate + CTP + H(+) = 4-CDP-2-C-methyl-D-erythritol + diphosphate. The protein operates within isoprenoid biosynthesis; isopentenyl diphosphate biosynthesis via DXP pathway; isopentenyl diphosphate from 1-deoxy-D-xylulose 5-phosphate: step 2/6. Catalyzes the formation of 4-diphosphocytidyl-2-C-methyl-D-erythritol from CTP and 2-C-methyl-D-erythritol 4-phosphate (MEP). This chain is 2-C-methyl-D-erythritol 4-phosphate cytidylyltransferase, found in Dechloromonas aromatica (strain RCB).